The following is a 73-amino-acid chain: Ubiquitin-like protein 5 (73 aa).

Residues 1-73 (MIEITCNDRL…DGMNLELYYQ (73 aa)) form the Ubiquitin-like domain.

The protein localises to the cytoplasm. The polypeptide is Ubiquitin-like protein 5 (ubl) (Drosophila melanogaster (Fruit fly)).